A 481-amino-acid polypeptide reads, in one-letter code: Phenylalanine--tRNA ligase alpha subunit (481 aa).

L-phenylalanine-binding positions include threonine 322, 361–363 (QLE), and tyrosine 401. Glutamate 403 lines the Mg(2+) pocket. Phenylalanine 426 lines the L-phenylalanine pocket.

This sequence belongs to the class-II aminoacyl-tRNA synthetase family. Phe-tRNA synthetase alpha subunit type 2 subfamily. In terms of assembly, tetramer of two alpha and two beta subunits. The cofactor is Mg(2+).

It is found in the cytoplasm. The enzyme catalyses tRNA(Phe) + L-phenylalanine + ATP = L-phenylalanyl-tRNA(Phe) + AMP + diphosphate + H(+). The protein is Phenylalanine--tRNA ligase alpha subunit of Methanoculleus marisnigri (strain ATCC 35101 / DSM 1498 / JR1).